A 319-amino-acid chain; its full sequence is Protease HtpX homolog (319 aa).

2 consecutive transmembrane segments (helical) span residues 3–23 and 32–52; these read LTVL…AWAL and TGVA…QWLF. Histidine 134 is a binding site for Zn(2+). Glutamate 135 is an active-site residue. Histidine 138 is a Zn(2+) binding site. 2 helical membrane passes run 146–166 and 182–202; these read VILA…TLVW and MALV…QLIV. Glutamate 210 contributes to the Zn(2+) binding site.

Belongs to the peptidase M48B family. It depends on Zn(2+) as a cofactor.

It is found in the cell membrane. This chain is Protease HtpX homolog, found in Aeropyrum pernix (strain ATCC 700893 / DSM 11879 / JCM 9820 / NBRC 100138 / K1).